Consider the following 211-residue polypeptide: Uridine kinase (211 aa).

12-19 contacts ATP; sequence GGTGSGKT.

Belongs to the uridine kinase family.

The protein resides in the cytoplasm. It carries out the reaction uridine + ATP = UMP + ADP + H(+). The enzyme catalyses cytidine + ATP = CMP + ADP + H(+). It functions in the pathway pyrimidine metabolism; CTP biosynthesis via salvage pathway; CTP from cytidine: step 1/3. The protein operates within pyrimidine metabolism; UMP biosynthesis via salvage pathway; UMP from uridine: step 1/1. The polypeptide is Uridine kinase (Halalkalibacterium halodurans (strain ATCC BAA-125 / DSM 18197 / FERM 7344 / JCM 9153 / C-125) (Bacillus halodurans)).